Reading from the N-terminus, the 108-residue chain is MEGLRPSDRLLSLLLTVGGLSLVLAQSECNCSSVSPGVLAGIVLGDLMLTLLIALAVYYLGRLVPRGRGATEVTRKQHIPETESPYQELQGQRTDVYSDLNTQRPYYK.

A signal peptide spans 1-25 (MEGLRPSDRLLSLLLTVGGLSLVLA). Residues 26–36 (QSECNCSSVSP) are Extracellular-facing. The helical transmembrane segment at 37 to 57 (GVLAGIVLGDLMLTLLIALAV) threads the bilayer. D46 is a binding site for Ca(2+). The Cytoplasmic portion of the chain corresponds to 58 to 108 (YYLGRLVPRGRGATEVTRKQHIPETESPYQELQGQRTDVYSDLNTQRPYYK). A disordered region spans residues 71 to 108 (TEVTRKQHIPETESPYQELQGQRTDVYSDLNTQRPYYK). The ITAM domain occupies 75–103 (RKQHIPETESPYQELQGQRTDVYSDLNTQ). Residues 84–108 (SPYQELQGQRTDVYSDLNTQRPYYK) show a composition bias toward polar residues. Phosphotyrosine is present on residues Y86 and Y97.

Belongs to the TYROBP family. Homodimer; disulfide-linked. Homotrimer; disulfide-linked. Homotetramer; disulfide-linked. Homotrimers and homotetramers form when low levels of partner receptors are available and is competitive with assembly with interacting receptors. They may represent alternative oligomerization states or may be intermediates in the receptor assembly process. Binding of a metal cation aids in homooligomerization through coordination of the metal ion by the subunits of the oligomer. Interacts with TREM1. Interacts with TREM2. Interacts with CLECSF5. Interacts with CD300LB and CD300C2. Interacts with CD300E. Interacts (via ITAM domain) with SYK (via SH2 domains); activates SYK mediating neutrophils and macrophages integrin-mediated activation. Interacts with KLRC2. Interacts with CD300H. Interacts with KLRD1. Interacts with SIGLEC1. Post-translationally, following ligand binding by associated receptors, tyrosine phosphorylated in the ITAM domain which leads to activation of additional tyrosine kinases and subsequent cell activation.

It localises to the cell membrane. Adapter protein which non-covalently associates with activating receptors found on the surface of a variety of immune cells to mediate signaling and cell activation following ligand binding by the receptors. TYROBP is tyrosine-phosphorylated in the ITAM domain following ligand binding by the associated receptors which leads to activation of additional tyrosine kinases and subsequent cell activation. Also has an inhibitory role in some cells. Non-covalently associates with activating receptors of the CD300 family to mediate cell activation. Also mediates cell activation through association with activating receptors of the CD200R family. Required for neutrophil activation mediated by integrin. Required for the activation of myeloid cells mediated by the CLEC5A/MDL1 receptor. Associates with natural killer (NK) cell receptors such as the KLRD1/KLRC2 heterodimer to mediate NK cell activation. Associates with TREM1 to mediate activation of neutrophils and monocytes. Associates with TREM2 on monocyte-derived dendritic cells to mediate up-regulation of chemokine receptor CCR7 and dendritic cell maturation and survival. Association with TREM2 mediates cytokine-induced formation of multinucleated giant cells which are formed by the fusion of macrophages. Stabilizes the TREM2 C-terminal fragment (TREM2-CTF) produced by TREM2 ectodomain shedding which suppresses the release of pro-inflammatory cytokines. In microglia, required with TREM2 for phagocytosis of apoptotic neurons. Required with ITGAM/CD11B in microglia to control production of microglial superoxide ions which promote the neuronal apoptosis that occurs during brain development. Promotes pro-inflammatory responses in microglia following nerve injury which accelerates degeneration of injured neurons. Positively regulates the expression of the IRAK3/IRAK-M kinase and IL10 production by liver dendritic cells and inhibits their T cell allosimulatory ability. Negatively regulates B cell proliferation. Required for CSF1-mediated osteoclast cytoskeletal organization. Positively regulates multinucleation during osteoclast development. This Bos taurus (Bovine) protein is TYRO protein tyrosine kinase-binding protein.